The primary structure comprises 760 residues: Prolyl endopeptidase FAP (760 aa).

The Cytoplasmic segment spans residues 1–4 (MKTW). Residues 5 to 25 (VKIVFGVATSAVLALLVMCIV) form a helical; Signal-anchor for type II membrane protein membrane-spanning segment. The Extracellular portion of the chain corresponds to 26–760 (LRPSRVHNSE…FLKQCFSLSD (735 aa)). N-linked (GlcNAc...) asparagine glycans are attached at residues asparagine 49, asparagine 92, and asparagine 99. 2 residues coordinate substrate: glutamate 203 and glutamate 204. Residues asparagine 227 and asparagine 314 are each glycosylated (N-linked (GlcNAc...) asparagine). 3 cysteine pairs are disulfide-bonded: cysteine 321-cysteine 332, cysteine 438-cysteine 441, and cysteine 448-cysteine 466. The active-site Charge relay system is the serine 624. Cysteine 643 and cysteine 755 are disulfide-bonded. Residue asparagine 679 is glycosylated (N-linked (GlcNAc...) asparagine). Active-site charge relay system residues include aspartate 702 and histidine 734.

The protein belongs to the peptidase S9B family. In terms of assembly, homodimer; homodimerization is required for activity of both plasma membrane and soluble forms. The monomer is inactive. Heterodimer with DPP4. Interacts with PLAUR; the interaction occurs at the cell surface of invadopodia membranes. Interacts with ITGB1. Interacts with ITGA3. Associates with integrin alpha-3/beta-1; the association occurs in a collagen-dependent manner at the cell surface of invadopodia membranes. In terms of processing, N-glycosylated. Post-translationally, the N-terminus may be blocked. As to expression, expressed in adipose tissue. Expressed in the dermal fibroblasts in the fetal skin. Expressed in the granulation tissue of healing wounds and on reactive stromal fibroblast in epithelial cancers. Expressed in activated fibroblast-like synoviocytes from inflamed synovial tissues. Expressed in activated hepatic stellate cells (HSC) and myofibroblasts from cirrhotic liver, but not detected in normal liver. Expressed in glioma cells (at protein level). Expressed in glioblastomas and glioma cells. Isoform 1 and isoform 2 are expressed in melanoma, carcinoma and fibroblast cell lines.

The protein resides in the cell surface. It is found in the cell membrane. Its subcellular location is the cell projection. The protein localises to the lamellipodium membrane. It localises to the invadopodium membrane. The protein resides in the ruffle membrane. It is found in the membrane. Its subcellular location is the secreted. The protein localises to the cytoplasm. The catalysed reaction is Hydrolysis of Pro-|-Xaa &gt;&gt; Ala-|-Xaa in oligopeptides.. The enzyme catalyses Release of an N-terminal dipeptide, Xaa-Yaa-|-Zaa-, from a polypeptide, preferentially when Yaa is Pro, provided Zaa is neither Pro nor hydroxyproline.. With respect to regulation, gelatinase activity is inhibited by serine-protease inhibitors, such as phenylmethylsulfonyl fluoride (PMSF), 4-(2-aminoethyl)-benzenesulfonyl fluoride hydrochloride (AEBSF), 4-amidino phenylsulfonyl fluoride (APSF) and diisopropyl fluorophosphate (DFP), N-ethylmaleimide (NEM) and phenylmethylsulfonyl fluoride (PMSF). Dipeptidyl peptidase activity is inhibited by 2,2'-azino-bis(3-ethylbenzthiazoline-6-sulfonic acid), diisopropylfluorophosphate (DFP). Prolyl endopeptidase activity is inhibited by the boronic acid peptide Ac-Gly-BoroPro, Ac-Gly-Pro-chloromethyl ketone and Thr-Ser-Gly-chloromethyl ketone. Functionally, cell surface glycoprotein serine protease that participates in extracellular matrix degradation and involved in many cellular processes including tissue remodeling, fibrosis, wound healing, inflammation and tumor growth. Both plasma membrane and soluble forms exhibit post-proline cleaving endopeptidase activity, with a marked preference for Ala/Ser-Gly-Pro-Ser/Asn/Ala consensus sequences, on substrate such as alpha-2-antiplasmin SERPINF2 and SPRY2. Degrade also gelatin, heat-denatured type I collagen, but not native collagen type I and IV, vitronectin, tenascin, laminin, fibronectin, fibrin or casein. Also has dipeptidyl peptidase activity, exhibiting the ability to hydrolyze the prolyl bond two residues from the N-terminus of synthetic dipeptide substrates provided that the penultimate residue is proline, with a preference for Ala-Pro, Ile-Pro, Gly-Pro, Arg-Pro and Pro-Pro. Natural neuropeptide hormones for dipeptidyl peptidase are the neuropeptide Y (NPY), peptide YY (PYY), substance P (TAC1) and brain natriuretic peptide 32 (NPPB). The plasma membrane form, in association with either DPP4, PLAUR or integrins, is involved in the pericellular proteolysis of the extracellular matrix (ECM), and hence promotes cell adhesion, migration and invasion through the ECM. Plays a role in tissue remodeling during development and wound healing. Participates in the cell invasiveness towards the ECM in malignant melanoma cancers. Enhances tumor growth progression by increasing angiogenesis, collagen fiber degradation and apoptosis and by reducing antitumor response of the immune system. Promotes glioma cell invasion through the brain parenchyma by degrading the proteoglycan brevican. Acts as a tumor suppressor in melanocytic cells through regulation of cell proliferation and survival in a serine protease activity-independent manner. This chain is Prolyl endopeptidase FAP, found in Homo sapiens (Human).